Reading from the N-terminus, the 65-residue chain is Large ribosomal subunit protein bL33c (65 aa).

Belongs to the bacterial ribosomal protein bL33 family.

It localises to the plastid. The protein resides in the chloroplast. This Gracilaria tenuistipitata var. liui (Red alga) protein is Large ribosomal subunit protein bL33c.